The sequence spans 123 residues: Small ribosomal subunit protein uS12 (123 aa).

A 3-methylthioaspartic acid modification is found at aspartate 89. Residues 101–123 (TLDTQGVKDRRQRRSKYGAKRPK) form a disordered region. The span at 110 to 123 (RRQRRSKYGAKRPK) shows a compositional bias: basic residues.

The protein belongs to the universal ribosomal protein uS12 family. As to quaternary structure, part of the 30S ribosomal subunit. Contacts proteins S8 and S17. May interact with IF1 in the 30S initiation complex.

Functionally, with S4 and S5 plays an important role in translational accuracy. In terms of biological role, interacts with and stabilizes bases of the 16S rRNA that are involved in tRNA selection in the A site and with the mRNA backbone. Located at the interface of the 30S and 50S subunits, it traverses the body of the 30S subunit contacting proteins on the other side and probably holding the rRNA structure together. The combined cluster of proteins S8, S12 and S17 appears to hold together the shoulder and platform of the 30S subunit. The protein is Small ribosomal subunit protein uS12 of Paramagnetospirillum magneticum (strain ATCC 700264 / AMB-1) (Magnetospirillum magneticum).